An 889-amino-acid chain; its full sequence is Terminal uridylyltransferase 3 (889 aa).

The segment at 123–151 (VRCDLCAKMIESRDEEQIQEHFQVHHAAL) adopts a C2H2-type; atypical zinc-finger fold. The Zn(2+) site is built by cysteine 125, cysteine 128, histidine 143, and histidine 148. Residues serine 225 and 236–239 (SDAD) contribute to the UTP site. Positions 237 and 239 each coordinate Mg(2+). Arginine 286 is an RNA binding site. Residues 394 to 398 (GVRNS), lysine 419, lysine 423, and 437 to 438 (SY) contribute to the UTP site. A PAP-associated domain is found at 505 to 572 (LGGLIPLFFL…LCIDDPYEDN (68 aa)). Positions 565-574 (IDDPYEDNFN) match the Nucleotide recognition motif (NRM) motif. 2 disordered regions span residues 675–702 (NNKS…HVES) and 829–849 (RKKS…NHAG). Residues 829–846 (RKKSKGSKKRKNAVRRGN) are compositionally biased toward basic residues.

This sequence belongs to the DNA polymerase type-B-like family. Mg(2+) serves as cofactor. Requires Mn(2+) as cofactor.

The protein localises to the cytoplasm. The catalysed reaction is RNA(n) + UTP = RNA(n)-3'-uridine ribonucleotide + diphosphate. Its function is as follows. Terminal uridylyltransferase which catalyzes the addition of Us to the 3'-hydroxyl group of single-stranded RNAs. Does not mediate RNA-independent UTP polymerization. The sequence is that of Terminal uridylyltransferase 3 from Trypanosoma brucei brucei.